Reading from the N-terminus, the 351-residue chain is Phosphoribosylformylglycinamidine cyclo-ligase (351 aa).

This sequence belongs to the AIR synthase family.

It localises to the cytoplasm. It catalyses the reaction 2-formamido-N(1)-(5-O-phospho-beta-D-ribosyl)acetamidine + ATP = 5-amino-1-(5-phospho-beta-D-ribosyl)imidazole + ADP + phosphate + H(+). The protein operates within purine metabolism; IMP biosynthesis via de novo pathway; 5-amino-1-(5-phospho-D-ribosyl)imidazole from N(2)-formyl-N(1)-(5-phospho-D-ribosyl)glycinamide: step 2/2. In Burkholderia cenocepacia (strain ATCC BAA-245 / DSM 16553 / LMG 16656 / NCTC 13227 / J2315 / CF5610) (Burkholderia cepacia (strain J2315)), this protein is Phosphoribosylformylglycinamidine cyclo-ligase.